The sequence spans 241 residues: Uracil-DNA glycosylase (241 aa).

Catalysis depends on Asp73, which acts as the Proton acceptor.

The protein belongs to the uracil-DNA glycosylase (UDG) superfamily. UNG family.

Its subcellular location is the cytoplasm. The catalysed reaction is Hydrolyzes single-stranded DNA or mismatched double-stranded DNA and polynucleotides, releasing free uracil.. Excises uracil residues from the DNA which can arise as a result of misincorporation of dUMP residues by DNA polymerase or due to deamination of cytosine. In Agrobacterium fabrum (strain C58 / ATCC 33970) (Agrobacterium tumefaciens (strain C58)), this protein is Uracil-DNA glycosylase.